The sequence spans 125 residues: Protein ApaG (125 aa).

The region spanning methionine 1 to histidine 125 is the ApaG domain.

The polypeptide is Protein ApaG (Escherichia coli (strain SE11)).